The primary structure comprises 487 residues: Protein Optix (487 aa).

The homeobox DNA-binding region spans 154–214 (WDGEQKTHCF…KNRRQRDRAA (61 aa)). Disordered stretches follow at residues 182–330 (NPTK…GAGP) and 443–463 (ASVG…GYHH). Polar residues predominate over residues 255-277 (GTHSPVPSSLQLQHSPGSTSNGA). Residues 278-293 (NDREESLSVDDDKPRD) show a composition bias toward basic and acidic residues. Over residues 294 to 312 (LSGSLPLPLSLPLPLASPT) the composition is skewed to low complexity. Over residues 321–330 (GYGGGAGAGP) the composition is skewed to gly residues.

It belongs to the SIX/Sine oculis homeobox family. As to expression, expressed during early development of the head. First expressed in a band around the anterior end of stage 5 blastoderm embryo, at 93% to 85% egg length. By gastrula stage, site of expression shifts to the dorsal-anterior region. At stage 12, expression is found in the clypeolabrum, the stomodaeum, and in ectoderm dorsal to the future supraesophageal ganglion.

Its subcellular location is the nucleus. Functionally, may be involved in head or eye development; development of the clypeolabrum and several head sensory organs. The protein is Protein Optix (Optix) of Drosophila melanogaster (Fruit fly).